The chain runs to 99 residues: UPF0473 protein LEUM_0559 (99 aa).

Belongs to the UPF0473 family.

This is UPF0473 protein LEUM_0559 from Leuconostoc mesenteroides subsp. mesenteroides (strain ATCC 8293 / DSM 20343 / BCRC 11652 / CCM 1803 / JCM 6124 / NCDO 523 / NBRC 100496 / NCIMB 8023 / NCTC 12954 / NRRL B-1118 / 37Y).